Here is a 311-residue protein sequence, read N- to C-terminus: Aldose reductase B (311 aa).

NADP(+) is bound at residue 13 to 23; sequence DIHHIPMIGLG. Tyr54 functions as the Proton donor in the catalytic mechanism. His116 provides a ligand contact to substrate. 219 to 273 contacts NADP(+); the sequence is SPLGQGKCDLLSNETLKSIADKHNKTVANVIFKWLNQRGIVTIPKSSNPARIIEN.

It belongs to the aldo/keto reductase family.

It catalyses the reaction an alditol + NAD(+) = an aldose + NADH + H(+). It carries out the reaction an alditol + NADP(+) = an aldose + NADPH + H(+). In terms of biological role, catalyzes the NADPH-dependent reduction of a wide variety of carbonyl-containing compounds to their corresponding alcohols with a broad range of catalytic efficiencies. The sequence is that of Aldose reductase B (alrB) from Dictyostelium discoideum (Social amoeba).